A 425-amino-acid polypeptide reads, in one-letter code: Dihydroorotase (425 aa).

Residues H61 and H63 each coordinate Zn(2+). Substrate is bound by residues 63-65 (HLR) and N95. 3 residues coordinate Zn(2+): D153, H180, and H233. N279 is a binding site for substrate. Residue D306 participates in Zn(2+) binding. Residue D306 is part of the active site. H310 serves as a coordination point for substrate.

It belongs to the metallo-dependent hydrolases superfamily. DHOase family. Class I DHOase subfamily. Zn(2+) is required as a cofactor.

It carries out the reaction (S)-dihydroorotate + H2O = N-carbamoyl-L-aspartate + H(+). The protein operates within pyrimidine metabolism; UMP biosynthesis via de novo pathway; (S)-dihydroorotate from bicarbonate: step 3/3. Its function is as follows. Catalyzes the reversible cyclization of carbamoyl aspartate to dihydroorotate. This is Dihydroorotase from Trichlorobacter lovleyi (strain ATCC BAA-1151 / DSM 17278 / SZ) (Geobacter lovleyi).